A 547-amino-acid polypeptide reads, in one-letter code: Methionine--tRNA ligase (547 aa).

Residues 15 to 25 (PYANGSIHIGH) carry the 'HIGH' region motif. Zn(2+) is bound by residues cysteine 146, cysteine 149, cysteine 159, and cysteine 162. Positions 332–336 (KLSKS) match the 'KMSKS' region motif. Lysine 335 lines the ATP pocket.

This sequence belongs to the class-I aminoacyl-tRNA synthetase family. MetG type 1 subfamily. Monomer. The cofactor is Zn(2+).

The protein localises to the cytoplasm. The enzyme catalyses tRNA(Met) + L-methionine + ATP = L-methionyl-tRNA(Met) + AMP + diphosphate. Is required not only for elongation of protein synthesis but also for the initiation of all mRNA translation through initiator tRNA(fMet) aminoacylation. The chain is Methionine--tRNA ligase (metG) from Buchnera aphidicola subsp. Acyrthosiphon pisum (strain APS) (Acyrthosiphon pisum symbiotic bacterium).